The sequence spans 266 residues: ATP synthase subunit a (266 aa).

The next 5 membrane-spanning stretches (helical) occupy residues 28–48, 88–108, 141–161, 206–226, and 237–257; these read SINV…LVIF, LIAP…MMDL, DVNI…FYSI, LFGN…LLPW, and AIFH…LTVV.

It belongs to the ATPase A chain family. As to quaternary structure, F-type ATPases have 2 components, CF(1) - the catalytic core - and CF(0) - the membrane proton channel. CF(1) has five subunits: alpha(3), beta(3), gamma(1), delta(1), epsilon(1). CF(0) has three main subunits: a(1), b(2) and c(9-12). The alpha and beta chains form an alternating ring which encloses part of the gamma chain. CF(1) is attached to CF(0) by a central stalk formed by the gamma and epsilon chains, while a peripheral stalk is formed by the delta and b chains.

It is found in the cell inner membrane. In terms of biological role, key component of the proton channel; it plays a direct role in the translocation of protons across the membrane. The polypeptide is ATP synthase subunit a (Pectobacterium atrosepticum (strain SCRI 1043 / ATCC BAA-672) (Erwinia carotovora subsp. atroseptica)).